Here is a 515-residue protein sequence, read N- to C-terminus: Pisatin demethylase (515 aa).

Position 453 (C453) interacts with heme.

It belongs to the cytochrome P450 family. Requires heme as cofactor.

Its function is as follows. Can detoxify the phytoalexin pisatin from garden pea. Pisatin is an antimicrobial compound produced by pea in response to infection by plant pathogens. The polypeptide is Pisatin demethylase (PDAT9) (Fusarium vanettenii (Neocosmospora pisi)).